The chain runs to 310 residues: Ribosomal RNA small subunit methyltransferase H (310 aa).

S-adenosyl-L-methionine is bound by residues 32–34, Asp52, Phe79, Asp100, and Gln107; that span reads AGH.

This sequence belongs to the methyltransferase superfamily. RsmH family.

Its subcellular location is the cytoplasm. The catalysed reaction is cytidine(1402) in 16S rRNA + S-adenosyl-L-methionine = N(4)-methylcytidine(1402) in 16S rRNA + S-adenosyl-L-homocysteine + H(+). Its function is as follows. Specifically methylates the N4 position of cytidine in position 1402 (C1402) of 16S rRNA. The polypeptide is Ribosomal RNA small subunit methyltransferase H (Bacillus pumilus (strain SAFR-032)).